A 309-amino-acid polypeptide reads, in one-letter code: Probable 2,4-dienoyl-CoA reductase 3 [(3E)-enoyl-CoA-producing] (309 aa).

Residues 32–37 (GGGTGI), Arg-57, and Asp-83 each bind NADP(+). Arg-57 is a substrate binding site. 2 residues coordinate substrate: Phe-116 and Ser-124. Tyr-166 functions as the Proton acceptor in the catalytic mechanism. Residues Lys-181 and 207-210 (PGPI) each bind NADP(+). Arg-218 is a substrate binding site.

The protein belongs to the short-chain dehydrogenases/reductases (SDR) family. 2,4-dienoyl-CoA reductase subfamily.

It catalyses the reaction a (2E,4E)-dienoyl-CoA + NADPH + H(+) = a 4,5-saturated-(3E)-enoyl-CoA + NADP(+). It carries out the reaction a (2E,4Z)-dienoyl-CoA + NADPH + H(+) = a 4,5-saturated-(3E)-enoyl-CoA + NADP(+). In terms of biological role, auxiliary enzyme of beta-oxidation. It participates in the metabolism of unsaturated fatty enoyl-CoA esters having double bonds in both even- and odd-numbered positions. Catalyzes the NADP-dependent reduction of 2,4-dienoyl-CoA to yield trans-3-enoyl-CoA. This is Probable 2,4-dienoyl-CoA reductase 3 [(3E)-enoyl-CoA-producing] from Caenorhabditis elegans.